The chain runs to 510 residues: Protein fork head (510 aa).

Disordered regions lie at residues 1-62 (MQKL…SPLA) and 175-205 (AMPP…YRRS). The segment covering 20-39 (SGGGGPPSGGGGGGGGGGGG) has biased composition (gly residues). Residues 47–60 (NNPNPTSNGGSMSP) are compositionally biased toward low complexity. A phosphoserine mark is found at serine 187 and serine 190. The segment at residues 209 to 300 (AKPPYSYISL…GNMFENGCYL (92 aa)) is a DNA-binding region (fork-head). The interval 309–359 (EKKEAIRQLHKSPSHSSLEATSPGKKDHEDSHHMHHHHHSRLDHHQHHKEA) is disordered. Phosphoserine occurs at positions 320, 322, and 330. A compositionally biased stretch (basic residues) spans 341 to 356 (HMHHHHHSRLDHHQHH).

It localises to the nucleus. Fkh promotes terminal as opposed to segmental development. In the absence of fkh, this developmental switch does not occur. The nuclear localization of the fkh protein suggest that fkh regulates the transcription of other, subordinate, genes. The polypeptide is Protein fork head (fkh) (Drosophila melanogaster (Fruit fly)).